Reading from the N-terminus, the 324-residue chain is Porphobilinogen deaminase (324 aa).

Residue Cys-246 is modified to S-(dipyrrolylmethanemethyl)cysteine. The interval 261–279 is insert; the sequence is GQAPEEGGRAAASQAPAAL.

The protein belongs to the HMBS family. As to quaternary structure, monomer. The cofactor is dipyrromethane.

It catalyses the reaction 4 porphobilinogen + H2O = hydroxymethylbilane + 4 NH4(+). It participates in porphyrin-containing compound metabolism; protoporphyrin-IX biosynthesis; coproporphyrinogen-III from 5-aminolevulinate: step 2/4. In terms of biological role, tetrapolymerization of the monopyrrole PBG into the hydroxymethylbilane pre-uroporphyrinogen in several discrete steps. The chain is Porphobilinogen deaminase (hemC) from Paenibacillus macerans (Bacillus macerans).